A 291-amino-acid chain; its full sequence is Diaminopimelate epimerase (291 aa).

The substrate site is built by asparagine 17, glutamine 50, and asparagine 70. Residue cysteine 79 is the Proton donor of the active site. Residues 80-81, asparagine 167, asparagine 200, and 218-219 contribute to the substrate site; these read GN and ER. Cysteine 227 acts as the Proton acceptor in catalysis. Substrate is bound at residue 228 to 229; sequence GS.

It belongs to the diaminopimelate epimerase family. As to quaternary structure, homodimer.

The protein resides in the cytoplasm. It carries out the reaction (2S,6S)-2,6-diaminopimelate = meso-2,6-diaminopimelate. It functions in the pathway amino-acid biosynthesis; L-lysine biosynthesis via DAP pathway; DL-2,6-diaminopimelate from LL-2,6-diaminopimelate: step 1/1. Catalyzes the stereoinversion of LL-2,6-diaminopimelate (L,L-DAP) to meso-diaminopimelate (meso-DAP), a precursor of L-lysine and an essential component of the bacterial peptidoglycan. This Bradyrhizobium diazoefficiens (strain JCM 10833 / BCRC 13528 / IAM 13628 / NBRC 14792 / USDA 110) protein is Diaminopimelate epimerase.